Consider the following 203-residue polypeptide: Somatotropin (203 aa).

An N-terminal signal peptide occupies residues 1 to 17 (MDRVVLMLSVLSLGVSS). Gln-18 is subject to Pyrrolidone carboxylic acid. His-36 provides a ligand contact to Zn(2+). A disulfide bridge links Cys-68 with Cys-176. Residue Glu-185 participates in Zn(2+) binding. Cys-193 and Cys-201 are disulfide-bonded.

Belongs to the somatotropin/prolactin family.

Its subcellular location is the secreted. Its function is as follows. Growth hormone plays an important role in growth control and is involved in the regulation of several anabolic processes. Implicated as an osmoregulatory substance important for seawater adaptation. This Pagrus major (Red sea bream) protein is Somatotropin (gh).